The sequence spans 552 residues: MAEKQKHDGRVKIGHYVLGDTLGVGTFGKVKIGEHQLTGHKVAVKILNRQKIRSLDVVGKIKREIQNLKLFRHPHIIKLYQVISTPTDFFMVMEYVSGGELFDYICKHGRVEEMEARRLFQQILSAVDYCHRHMVVHRDLKPENVLLDAQMNAKIADFGLSNMMSDGEFLRTSCGSPNYAAPEVISGRLYAGPEVDIWSCGVILYALLCGTLPFDDEHVPTLFKKIRGGVFYIPEYLNRSVATLLMHMLQVDPLKRATIKDIREHEWFKQDLPSYLFPEDPSYDANVIDDEAVKEVCEKFECTESEVMNSLYSGDPQDQLAVAYHLVIDNRRIMNQASEFYLASSPPTGSFMDDSAMHIPPGLKPHPERMPPLIADSPKARCPLDALNTTKPKSLAVKKAKWHLGIRSQSKPYDIMAEVYRAMKQLDFEWKVVNAYHLRVRRKNPVTGNYVKMSLQLYLVDNRSYLLDFKSIDDEVLEQRSGSSTPQRSCSAAGLHRPRSSLDSVTAESHSLSGSLSGSLTGSMLPSVPPRLGSHTMDFFEMCASLITTLAR.

In terms of domain architecture, Protein kinase spans 16–268 (YVLGDTLGVG…IKDIREHEWF (253 aa)). ATP is bound by residues 22-30 (LGVGTFGKV) and Lys45. Residue Asp139 is the Proton acceptor of the active site. The residue at position 172 (Thr172) is a Phosphothreonine; by LKB1 and CaMKK2. Thr258 is modified (phosphothreonine). An AIS region spans residues 291 to 376 (EAVKEVCEKF…PERMPPLIAD (86 aa)). Ser377 carries the phosphoserine modification. The tract at residues 478-519 (EQRSGSSTPQRSCSAAGLHRPRSSLDSVTAESHSLSGSLSGS) is disordered. The span at 480–490 (RSGSSTPQRSC) shows a compositional bias: polar residues. The residue at position 491 (Ser491) is a Phosphoserine. The span at 509–519 (SHSLSGSLSGS) shows a compositional bias: low complexity.

This sequence belongs to the protein kinase superfamily. CAMK Ser/Thr protein kinase family. SNF1 subfamily. AMPK is a heterotrimer of an alpha catalytic subunit (PRKAA1 or PRKAA2), a beta (PRKAB1 or PRKAB2) and a gamma non-catalytic subunits (PRKAG1, PRKAG2 or PRKAG3). Interacts with FNIP1 and FNIP2. Interacts with DUSP29. Interacts with ARF6. The phosphorylated form at Thr-172 mediated by CamKK2 interacts with ACSS2. Requires Mg(2+) as cofactor. In terms of processing, ubiquitinated. Phosphorylated at Thr-172 by STK11/LKB1 in complex with STE20-related adapter-alpha (STRADA) pseudo kinase and CAB39. Also phosphorylated at Thr-172 by CAMKK2; triggered by a rise in intracellular calcium ions, without detectable changes in the AMP/ATP ratio. CAMKK1 can also phosphorylate Thr-172, but at much lower level. Dephosphorylated by protein phosphatase 2A and 2C (PP2A and PP2C). Phosphorylated by ULK1; leading to negatively regulate AMPK activity and suggesting the existence of a regulatory feedback loop between ULK1 and AMPK. Dephosphorylated by PPM1A and PPM1B at Thr-172 (mediated by STK11/LKB1).

It localises to the cytoplasm. The protein localises to the nucleus. The catalysed reaction is L-seryl-[protein] + ATP = O-phospho-L-seryl-[protein] + ADP + H(+). It carries out the reaction L-threonyl-[protein] + ATP = O-phospho-L-threonyl-[protein] + ADP + H(+). The enzyme catalyses L-seryl-[acetyl-CoA carboxylase] + ATP = O-phospho-L-seryl-[acetyl-CoA carboxylase] + ADP + H(+). It catalyses the reaction L-seryl-[3-hydroxy-3-methylglutaryl-coenzyme A reductase] + ATP = O-phospho-L-seryl-[3-hydroxy-3-methylglutaryl-coenzyme A reductase] + ADP + H(+). Activated by phosphorylation on Thr-172. Binding of AMP to non-catalytic gamma subunit (PRKAG1, PRKAG2 or PRKAG3) results in allosteric activation, inducing phosphorylation on Thr-172. AMP-binding to gamma subunit also sustains activity by preventing dephosphorylation of Thr-172. ADP also stimulates Thr-172 phosphorylation, without stimulating already phosphorylated AMPK. ATP promotes dephosphorylation of Thr-172, rendering the enzyme inactive. Under physiological conditions AMPK mainly exists in its inactive form in complex with ATP, which is much more abundant than AMP. Selectively inhibited by compound C (6-[4-(2-Piperidin-1-yl-ethoxy)-phenyl)]-3-pyridin-4-yl-pyyrazolo[1,5-a] pyrimidine. Activated by resveratrol, a natural polyphenol present in red wine, and S17834, a synthetic polyphenol. Salicylate/aspirin directly activates kinase activity, primarily by inhibiting Thr-172 dephosphorylation. Functionally, catalytic subunit of AMP-activated protein kinase (AMPK), an energy sensor protein kinase that plays a key role in regulating cellular energy metabolism. In response to reduction of intracellular ATP levels, AMPK activates energy-producing pathways and inhibits energy-consuming processes: inhibits protein, carbohydrate and lipid biosynthesis, as well as cell growth and proliferation. AMPK acts via direct phosphorylation of metabolic enzymes, and by longer-term effects via phosphorylation of transcription regulators. Regulates lipid synthesis by phosphorylating and inactivating lipid metabolic enzymes such as ACACA, ACACB, GYS1, HMGCR and LIPE; regulates fatty acid and cholesterol synthesis by phosphorylating acetyl-CoA carboxylase (ACACA and ACACB) and hormone-sensitive lipase (LIPE) enzymes, respectively. Promotes lipolysis of lipid droplets by mediating phosphorylation of isoform 1 of CHKA (CHKalpha2). Regulates insulin-signaling and glycolysis by phosphorylating IRS1, PFKFB2 and PFKFB3. Involved in insulin receptor/INSR internalization. AMPK stimulates glucose uptake in muscle by increasing the translocation of the glucose transporter SLC2A4/GLUT4 to the plasma membrane, possibly by mediating phosphorylation of TBC1D4/AS160. Regulates transcription and chromatin structure by phosphorylating transcription regulators involved in energy metabolism such as CRTC2/TORC2, FOXO3, histone H2B, HDAC5, MEF2C, MLXIPL/ChREBP, EP300, HNF4A, p53/TP53, SREBF1, SREBF2 and PPARGC1A. Acts as a key regulator of glucose homeostasis in liver by phosphorylating CRTC2/TORC2, leading to CRTC2/TORC2 sequestration in the cytoplasm. In response to stress, phosphorylates 'Ser-36' of histone H2B (H2BS36ph), leading to promote transcription. Acts as a key regulator of cell growth and proliferation by phosphorylating FNIP1, TSC2, RPTOR, WDR24 and ATG1/ULK1: in response to nutrient limitation, negatively regulates the mTORC1 complex by phosphorylating RPTOR component of the mTORC1 complex and by phosphorylating and activating TSC2. Also phosphorylates and inhibits GATOR2 subunit WDR24 in response to nutrient limitation, leading to suppress glucose-mediated mTORC1 activation. In response to energetic stress, phosphorylates FNIP1, inactivating the non-canonical mTORC1 signaling, thereby promoting nuclear translocation of TFEB and TFE3, and inducing transcription of lysosomal or autophagy genes. In response to nutrient limitation, promotes autophagy by phosphorylating and activating ATG1/ULK1. In that process also activates WDR45/WIPI4. Phosphorylates CASP6, thereby preventing its autoprocessing and subsequent activation. AMPK also acts as a regulator of circadian rhythm by mediating phosphorylation of CRY1, leading to destabilize it. May regulate the Wnt signaling pathway by phosphorylating CTNNB1, leading to stabilize it. Also acts as a regulator of cellular polarity by remodeling the actin cytoskeleton; probably by indirectly activating myosin. Also phosphorylates CFTR, EEF2K, KLC1, NOS3 and SLC12A1. Plays an important role in the differential regulation of pro-autophagy (composed of PIK3C3, BECN1, PIK3R4 and UVRAG or ATG14) and non-autophagy (composed of PIK3C3, BECN1 and PIK3R4) complexes, in response to glucose starvation. Can inhibit the non-autophagy complex by phosphorylating PIK3C3 and can activate the pro-autophagy complex by phosphorylating BECN1. Upon glucose starvation, promotes ARF6 activation in a kinase-independent manner leading to cell migration. Upon glucose deprivation mediates the phosphorylation of ACSS2 at 'Ser-659', which exposes the nuclear localization signal of ACSS2, required for its interaction with KPNA1 and nuclear translocation. Upon stress, regulates mitochondrial fragmentation through phosphorylation of MTFR1L. This Sus scrofa (Pig) protein is 5'-AMP-activated protein kinase catalytic subunit alpha-2 (PRKAA2).